A 482-amino-acid polypeptide reads, in one-letter code: Ribulose bisphosphate carboxylase large chain (482 aa).

A propeptide spanning residues 1–2 (MS) is cleaved from the precursor. Proline 3 carries the N-acetylproline modification. The residue at position 14 (lysine 14) is an N6,N6,N6-trimethyllysine. Positions 123 and 173 each coordinate substrate. Lysine 175 serves as the catalytic Proton acceptor. Position 177 (lysine 177) interacts with substrate. Mg(2+) contacts are provided by lysine 201, aspartate 203, and glutamate 204. At lysine 201 the chain carries N6-carboxylysine. The active-site Proton acceptor is the histidine 294. 3 residues coordinate substrate: arginine 295, histidine 327, and serine 379.

Belongs to the RuBisCO large chain family. Type I subfamily. As to quaternary structure, heterohexadecamer of 8 large chains and 8 small chains; disulfide-linked. The disulfide link is formed within the large subunit homodimers. Requires Mg(2+) as cofactor. In terms of processing, the disulfide bond which can form in the large chain dimeric partners within the hexadecamer appears to be associated with oxidative stress and protein turnover.

It is found in the plastid. The protein resides in the chloroplast. It carries out the reaction 2 (2R)-3-phosphoglycerate + 2 H(+) = D-ribulose 1,5-bisphosphate + CO2 + H2O. The catalysed reaction is D-ribulose 1,5-bisphosphate + O2 = 2-phosphoglycolate + (2R)-3-phosphoglycerate + 2 H(+). RuBisCO catalyzes two reactions: the carboxylation of D-ribulose 1,5-bisphosphate, the primary event in carbon dioxide fixation, as well as the oxidative fragmentation of the pentose substrate in the photorespiration process. Both reactions occur simultaneously and in competition at the same active site. The protein is Ribulose bisphosphate carboxylase large chain of Stegnosperma halimifolium.